The sequence spans 653 residues: Hepatocyte growth factor activator serine protease (653 aa).

An N-terminal signal peptide occupies residues 1–34 (MGRQAWISSLCPLPRPCPFLLLLLLLVVPRGAQP). Residues 34–98 (PQAGRNHTEP…SSSPPGGQVL (65 aa)) form a disordered region. Residues 35-369 (QAGRNHTEPP…RLTACESLAR (335 aa)) constitute a propeptide, removed in mature form. N-linked (GlcNAc...) asparagine glycosylation is found at Asn39, Asn47, and Asn63. Residues 47 to 59 (NVTATPVTPTIPV) are compositionally biased toward low complexity. The Fibronectin type-II domain maps to 100 to 147 (ESGQPCRFPFRYGGRMLHSCTSEGSAYRKWCATTHNYDRDRAWGYCAE). Intrachain disulfides connect Cys105/Cys130, Cys119/Cys145, Cys161/Cys172, Cys166/Cys183, Cys185/Cys194, Cys199/Cys227, Cys225/Cys234, Cys242/Cys253, Cys247/Cys264, Cys266/Cys275, Cys283/Cys364, Cys304/Cys346, Cys335/Cys359, Cys392/Cys519, Cys430/Cys446, Cys438/Cys508, Cys533/Cys602, Cys565/Cys581, and Cys592/Cys620. The region spanning 157 to 195 (ILDPCASGPCLNGGTCSSTHDHGSYHCSCPLAFTGKDCG) is the EGF-like 1 domain. The Fibronectin type-I domain maps to 197–237 (EKCFDETRYEYFEVGDHWARVSEGHVEQCGCMEGQARCEDT). The 39-residue stretch at 238–276 (HHTACLSSPCLNGGTCHLIVGTGTSVCTCPLGYAGRFCN) folds into the EGF-like 2 domain. One can recognise a Kringle domain in the interval 283-364 (CFLGNGTEYR…SWEYCRLTAC (82 aa)). Asn287 carries N-linked (GlcNAc...) asparagine glycosylation. The 239-residue stretch at 406–644 (IIGGSSSLPG…YVDWINDRIR (239 aa)) folds into the Peptidase S1 domain. The active-site Charge relay system is the His445. The N-linked (GlcNAc...) asparagine glycan is linked to Asn466. Catalysis depends on Asp495, which acts as the Charge relay system. Asn544 carries N-linked (GlcNAc...) asparagine glycosylation. Residue Ser596 is the Charge relay system of the active site.

It belongs to the peptidase S1 family. In terms of assembly, heterodimer of a short chain and a long chain linked by a disulfide bond. Post-translationally, the active form of HGFAC presents in the serum is derived from the COOH-terminal region of the precursor by the cleavage of bonds between Arg-369 and Val-370 and Arg-405 and Ile-406.

The protein localises to the secreted. Its function is as follows. Serine protease that hydrolyzes the inactive zymogen hepatocyte growth factor (HGFsc) to an activated disulfide-linked heterodimer, then initiating hepatocyte growth factor receptor signaling pathway. This is Hepatocyte growth factor activator serine protease from Mus musculus (Mouse).